A 347-amino-acid polypeptide reads, in one-letter code: Phenylalanine--tRNA ligase alpha subunit (347 aa).

Glu-265 serves as a coordination point for Mg(2+).

The protein belongs to the class-II aminoacyl-tRNA synthetase family. Phe-tRNA synthetase alpha subunit type 1 subfamily. As to quaternary structure, tetramer of two alpha and two beta subunits. Mg(2+) is required as a cofactor.

The protein localises to the cytoplasm. It carries out the reaction tRNA(Phe) + L-phenylalanine + ATP = L-phenylalanyl-tRNA(Phe) + AMP + diphosphate + H(+). In Mycolicibacterium gilvum (strain PYR-GCK) (Mycobacterium gilvum (strain PYR-GCK)), this protein is Phenylalanine--tRNA ligase alpha subunit.